A 68-amino-acid polypeptide reads, in one-letter code: Molybdenum-pterin-binding protein 1 (68 aa).

The region spanning 2-68 is the Mop domain; the sequence is SISARNQLKG…IKSTDVMILA (67 aa).

Binds one mole of molybdenum per mole of protein and contains a pterin. The polypeptide is Molybdenum-pterin-binding protein 1 (mopI) (Clostridium pasteurianum).